We begin with the raw amino-acid sequence, 350 residues long: C5a anaphylatoxin chemotactic receptor 1 (350 aa).

Residues 1 to 37 (MDSFNYTTPDYGHYDDKDTLDLNTPVDKTSNTLRVPD) lie on the Extracellular side of the membrane. N-linked (GlcNAc...) asparagine glycosylation occurs at N5. The tract at residues 10–18 (DYGHYDDKD) is required for CHIPS binding. Y11 and Y14 each carry sulfotyrosine. The segment at 21 to 30 (DLNTPVDKTS) is involved in C5a binding. A helical transmembrane segment spans residues 38–64 (ILALVIFAVVFLVGVLGNALVVWVTAF). At 65-69 (EAKRT) the chain is on the cytoplasmic side. Residues 70–93 (INAIWFLNLAVADFLSCLALPILF) form a helical membrane-spanning segment. Over 94 to 110 (TSIVQHHHWPFGGAACS) the chain is Extracellular. Residues C109 and C188 are joined by a disulfide bond. Residues 111 to 132 (ILPSLILLNMYASILLLATISA) traverse the membrane as a helical segment. Residues 133-153 (DRFLLVFKPIWCQNFRGAGLA) lie on the Cytoplasmic side of the membrane. The helical transmembrane segment at 154 to 174 (WIACAVAWGLALLLTIPSFLY) threads the bilayer. Over 175-200 (RVVREEYFPPKVLCGVDYSHDKRRER) the chain is Extracellular. Residues 201-226 (AVAIVRLVLGFLWPLLTLTICYTFIL) traverse the membrane as a helical segment. Over 227-242 (LRTWSRRATRSTKTLK) the chain is Cytoplasmic. A helical membrane pass occupies residues 243–265 (VVVAVVASFFIFWLPYQVTGIMM). At 266-282 (SFLEPSSPTFLLLKKLD) the chain is on the extracellular side. A helical membrane pass occupies residues 283-303 (SLCVSFAYINCCINPIIYVVA). Over 304 to 350 (GQGFQGRLRKSLPSLLRNVLTEESVVRESKSFTRSTVDTMAQKTQAV) the chain is Cytoplasmic. 6 positions are modified to phosphoserine: S314, S317, S327, S332, S334, and S338.

This sequence belongs to the G-protein coupled receptor 1 family. Homodimer. May also form higher-order oligomers. Interacts (when phosphorylated) with ARRB1 and ARRB2; the interaction is associated with internalization of C5aR. Interacts (via N-terminal domain) with S.aureus chemotaxis inhibitory protein (CHIPS); the interaction blocks the receptor and may thus inhibit the immune response. Post-translationally, sulfation plays a critical role in the association of C5aR with C5a, but no significant role in the ability of the receptor to transduce a signal and mobilize calcium in response to a small a small peptide agonist. Sulfation at Tyr-14 is important for CHIPS binding. In terms of processing, phosphorylated on serine residues in response to C5a binding, resulting in internalization of the receptor and short-term desensitization to the ligand. The key residues involved in this process are Ser-334 and Ser-338.

The protein resides in the cell membrane. Its subcellular location is the cytoplasmic vesicle. Its function is as follows. Receptor for the chemotactic and inflammatory peptide anaphylatoxin C5a. The ligand interacts with at least two sites on the receptor: a high-affinity site on the extracellular N-terminus, and a second site in the transmembrane region which activates downstream signaling events. Receptor activation stimulates chemotaxis, granule enzyme release, intracellular calcium release and superoxide anion production. This chain is C5a anaphylatoxin chemotactic receptor 1 (C5AR1), found in Homo sapiens (Human).